The sequence spans 146 residues: Large ribosomal subunit protein uL11 (146 aa).

It belongs to the universal ribosomal protein uL11 family. Part of the ribosomal stalk of the 50S ribosomal subunit. Interacts with L10 and the large rRNA to form the base of the stalk. L10 forms an elongated spine to which L12 dimers bind in a sequential fashion forming a multimeric L10(L12)X complex. One or more lysine residues are methylated.

Forms part of the ribosomal stalk which helps the ribosome interact with GTP-bound translation factors. In Corynebacterium kroppenstedtii (strain DSM 44385 / JCM 11950 / CIP 105744 / CCUG 35717), this protein is Large ribosomal subunit protein uL11.